The sequence spans 216 residues: Germin-like protein 1-1 (216 aa).

A signal peptide spans 1-24; it reads MARVQLWVAAACAVVLALAAPSLA. Cysteine 34 and cysteine 49 are disulfide-bonded. Residues asparagine 52 and asparagine 76 are each glycosylated (N-linked (GlcNAc...) asparagine). Positions 61–209 constitute a Cupin type-1 domain; it reads AGLKNPGNTN…AFRVDVPQVD (149 aa). Histidine 109, histidine 111, glutamate 116, and histidine 155 together coordinate Mn(2+).

Belongs to the germin family. In terms of assembly, oligomer (believed to be a pentamer but probably hexamer).

It localises to the secreted. The protein resides in the extracellular space. Its subcellular location is the apoplast. Its function is as follows. May play a role in plant defense. Probably has no oxalate oxidase activity even if the active site is conserved. The polypeptide is Germin-like protein 1-1 (GER4) (Oryza sativa subsp. japonica (Rice)).